We begin with the raw amino-acid sequence, 188 residues long: Protein GrpE (188 aa).

The disordered stretch occupies residues 1-24 (MSDENKPGEAAELDAGVAPEAQPE).

The protein belongs to the GrpE family. Homodimer.

It localises to the cytoplasm. Participates actively in the response to hyperosmotic and heat shock by preventing the aggregation of stress-denatured proteins, in association with DnaK and GrpE. It is the nucleotide exchange factor for DnaK and may function as a thermosensor. Unfolded proteins bind initially to DnaJ; upon interaction with the DnaJ-bound protein, DnaK hydrolyzes its bound ATP, resulting in the formation of a stable complex. GrpE releases ADP from DnaK; ATP binding to DnaK triggers the release of the substrate protein, thus completing the reaction cycle. Several rounds of ATP-dependent interactions between DnaJ, DnaK and GrpE are required for fully efficient folding. This is Protein GrpE from Hyphomonas neptunium (strain ATCC 15444).